The chain runs to 372 residues: Probable arabinan endo-1,5-alpha-L-arabinosidase B (372 aa).

The N-terminal stretch at 1–16 is a signal peptide; that stretch reads MTVLVALFCLVTWTLC. The span at 23–34 shows a compositional bias: low complexity; it reads STQGTQQPQQPE. Residues 23–52 are disordered; it reads STQGTQQPQQPEKTPHPHPQPEDAFPPTHA. Aspartate 59 serves as the catalytic Proton acceptor. N-linked (GlcNAc...) asparagine glycosylation is present at asparagine 120. Glutamate 252 acts as the Proton donor in catalysis. Asparagine 363 carries N-linked (GlcNAc...) asparagine glycosylation.

The protein belongs to the glycosyl hydrolase 43 family.

The protein localises to the secreted. The enzyme catalyses Endohydrolysis of (1-&gt;5)-alpha-arabinofuranosidic linkages in (1-&gt;5)-arabinans.. Its pathway is glycan metabolism; L-arabinan degradation. Functionally, endo-1,5-alpha-L-arabinanase involved in degradation of pectin. Its preferred substrate is linear 1,5-alpha-L-arabinan. The chain is Probable arabinan endo-1,5-alpha-L-arabinosidase B (abnB) from Aspergillus fumigatus (strain CBS 144.89 / FGSC A1163 / CEA10) (Neosartorya fumigata).